The following is a 1324-amino-acid chain: DNA-directed RNA polymerase subunit beta' (1324 aa).

Residues Cys219, Cys292, Cys299, and Cys302 each contribute to the Zn(2+) site. The segment at 1293–1324 is disordered; it reads ARDFEFASSDVEEDELTEEDDDYGDEEEEDAF. The span at 1302-1324 shows a compositional bias: acidic residues; it reads DVEEDELTEEDDDYGDEEEEDAF.

This sequence belongs to the RNA polymerase beta' chain family. RpoC2 subfamily. As to quaternary structure, in cyanobacteria the RNAP catalytic core is composed of 2 alpha, 1 beta, 1 beta', 1 gamma and 1 omega subunit. When a sigma factor is associated with the core the holoenzyme is formed, which can initiate transcription. It depends on Zn(2+) as a cofactor.

It carries out the reaction RNA(n) + a ribonucleoside 5'-triphosphate = RNA(n+1) + diphosphate. In terms of biological role, DNA-dependent RNA polymerase catalyzes the transcription of DNA into RNA using the four ribonucleoside triphosphates as substrates. This chain is DNA-directed RNA polymerase subunit beta', found in Thermosynechococcus vestitus (strain NIES-2133 / IAM M-273 / BP-1).